A 61-amino-acid polypeptide reads, in one-letter code: Small ribosomal subunit protein uS14B (61 aa).

Zn(2+)-binding residues include Cys24, Cys27, Cys40, and Cys43.

The protein belongs to the universal ribosomal protein uS14 family. Zinc-binding uS14 subfamily. Part of the 30S ribosomal subunit. Contacts proteins S3 and S10. Zn(2+) is required as a cofactor.

Functionally, binds 16S rRNA, required for the assembly of 30S particles and may also be responsible for determining the conformation of the 16S rRNA at the A site. This chain is Small ribosomal subunit protein uS14B, found in Staphylococcus saprophyticus subsp. saprophyticus (strain ATCC 15305 / DSM 20229 / NCIMB 8711 / NCTC 7292 / S-41).